A 401-amino-acid polypeptide reads, in one-letter code: Nicotinate phosphoribosyltransferase (401 aa).

Phosphohistidine; by autocatalysis is present on H221.

Belongs to the NAPRTase family. Transiently phosphorylated on a His residue during the reaction cycle. Phosphorylation strongly increases the affinity for substrates and increases the rate of nicotinate D-ribonucleotide production. Dephosphorylation regenerates the low-affinity form of the enzyme, leading to product release.

The enzyme catalyses nicotinate + 5-phospho-alpha-D-ribose 1-diphosphate + ATP + H2O = nicotinate beta-D-ribonucleotide + ADP + phosphate + diphosphate. The protein operates within cofactor biosynthesis; NAD(+) biosynthesis; nicotinate D-ribonucleotide from nicotinate: step 1/1. Functionally, catalyzes the synthesis of beta-nicotinate D-ribonucleotide from nicotinate and 5-phospho-D-ribose 1-phosphate at the expense of ATP. This chain is Nicotinate phosphoribosyltransferase, found in Pectobacterium atrosepticum (strain SCRI 1043 / ATCC BAA-672) (Erwinia carotovora subsp. atroseptica).